Consider the following 341-residue polypeptide: S-adenosylmethionine:tRNA ribosyltransferase-isomerase (341 aa).

Belongs to the QueA family. Monomer.

The protein resides in the cytoplasm. It carries out the reaction 7-aminomethyl-7-carbaguanosine(34) in tRNA + S-adenosyl-L-methionine = epoxyqueuosine(34) in tRNA + adenine + L-methionine + 2 H(+). It participates in tRNA modification; tRNA-queuosine biosynthesis. Transfers and isomerizes the ribose moiety from AdoMet to the 7-aminomethyl group of 7-deazaguanine (preQ1-tRNA) to give epoxyqueuosine (oQ-tRNA). The chain is S-adenosylmethionine:tRNA ribosyltransferase-isomerase from Clostridium botulinum (strain ATCC 19397 / Type A).